The sequence spans 443 residues: Histidine--tRNA ligase (443 aa).

Residues 1–20 (MTESEKKQQKPQKAKAEKFK) are compositionally biased toward basic and acidic residues. Residues 1–21 (MTESEKKQQKPQKAKAEKFKA) are disordered.

It belongs to the class-II aminoacyl-tRNA synthetase family. Homodimer.

Its subcellular location is the cytoplasm. The catalysed reaction is tRNA(His) + L-histidine + ATP = L-histidyl-tRNA(His) + AMP + diphosphate + H(+). The protein is Histidine--tRNA ligase of Corynebacterium jeikeium (strain K411).